We begin with the raw amino-acid sequence, 479 residues long: Oxysterol-binding protein homolog C23B6.01c (479 aa).

Phosphoserine is present on residues Ser-328, Ser-408, Ser-409, and Ser-421. A compositionally biased stretch (basic and acidic residues) spans 404-418 (KPEDSSIHKHSRDAS). Residues 404–479 (KPEDSSIHKH…KLHEEQDPAL (76 aa)) form a disordered region. Residues 439–452 (QSTASFVTYRSDNG) are compositionally biased toward polar residues. Positions 470 to 479 (KLHEEQDPAL) are enriched in basic and acidic residues.

It belongs to the OSBP family.

The protein resides in the cytoplasm. The protein localises to the nucleus. The chain is Oxysterol-binding protein homolog C23B6.01c from Schizosaccharomyces pombe (strain 972 / ATCC 24843) (Fission yeast).